Here is a 1544-residue protein sequence, read N- to C-terminus: MADELERVRISAAELRAQASSFNIHGDDVKDLREEGKKQRQRDSKRPDLQLYKPGVGHPNRRMDSVEGAGSDTLIQPDGFGNDPKMSDESPTSPGCSYMPGTGNEDYLNDHSKPETNHKTDGHIGGDKHKLVDENAVKIIERAGTPKSPKQSRKMRKPDRQIYQPGGRRSQGNKEVGASKELDRDRSREEEVDGKSIETPLKCEKEEKRKNRRGKNDRKKQASVETPSANKTENAVENISNKVSNLHLETVESKDRDRQDDTNQIKHSEEGRKIQTGGANRGMGEDKKKERGNGKSRPGKEKGNNQVFDKKEEGEAGGKASEAPHLEGRKQRNFGAKEASRDQNLNHEKQQGNRPKEKGKPSERTDSKRVNAASKRYSQSDIRRPRNRTYSTSSASSGTSMDGLAEAERLKAEGQQFSARTLERATGQREFVRGGQTRSRRRTARTLSSTDSLEENEVWEREGRRSRAAEEAKSSTRKEGGILRVSLDKREEQASRKSTRGRGRGILVLPAHTDLTQTPDPAPPLGGMRGGMGLGRGRGGRGGGTRRLWDPNNPDKKPALVSSQQSQHASQHQALYLQQGGCGPLHFLDTDDETVGSPPVRQGEFFQNQQAAAMAYYKFQNSDNPYCYPVSANSPNTPPRYPYPYQIPYQIPGSNGMYPASAMTSFYGPYGQGGPGYPSPTVSALTPEEAEVQTRGELGKFLRLADSQELQLSNLLSRERLSQEGLERMAQLRAELLTIYERVILTDIEFSDSQNVDQTLWKNVFYQVIERFRQLLKDQNSDTAPQIKTMLMTILEEGAVFFDSLLQKLQSVFQFKLQDYMDCMAIRARPLRKTVKYALISAQRCMICQGDIARYREQASESANYGKARSWYLKAQQIAPKNGRPYNQLALLAVYTKRKLDAVYYYMRSLAASNPILTAKESLMSLFEEAKRKADQVERRLKQDSDGSAHGPKGHTGGRRGEDAARVEIWIRPSEVSGTSRPTGSESGKDSEQDGELGALSASDLNKRFILSFLHAHGKLFTKVGMESFPAVANRVLLEFRALLQHSPSPLGSTRMLQIITINMFTIYNAQIRAKGQGETRSALEEQAISLGLAMFGLLVQRCTELLKETPTEPIPAEELGEFDEMDDEEGMVRVSVFPHDLRELLPSMKVWSDWMLGHPEKWNPPPCSMQGSPDVWQCLADLCNSFSRVYHGEVLLYKADADGEGDEELRVLQLEEDKMLSGFVPLLAAPQDACYTDQGTDAAIAADCKRVTVLKYFLEALCGQEEPLLAFKGGKYISMAAPLTPSINTENKAQEQEDDVIVEESSLSASEGEIDGEMEGDGSEDDIRELRARRHALAHKLAQQQKRRDKIQAVLQTGGQLEIEVRPFYLVPDTNGFIDHLEGLRKLLACGTYILVVPLIVITELDGLAKGQDSREGVGNGAHARQVQDRARAAVMFLEKAFESRDPSIRALTSRGNTLESIAFRSEDTSGQKGNNDDVILSCCLHYCQDKAKDFMPAERNGPVRLRREVVLLTDDRNLRVKALTRNVPVRDIPAFLIWAKVG.

3 stretches are compositionally biased toward basic and acidic residues: residues 25–48, 108–141, and 177–209; these read HGDD…KRPD, LNDH…KIIE, and GASK…EEKR. Disordered regions lie at residues 25 to 503, 536 to 573, 936 to 964, and 976 to 996; these read HGDD…RGRG, RGRG…SQHQ, QVER…GEDA, and VSGT…QDGE. A compositionally biased stretch (polar residues) spans 223-244; sequence SVETPSANKTENAVENISNKVS. Composition is skewed to basic and acidic residues over residues 249 to 273, 283 to 330, and 338 to 369; these read ETVE…EGRK, MGED…EGRK, and EASR…DSKR. The segment covering 389–400 has biased composition (low complexity); that stretch reads TYSTSSASSGTS. Basic and acidic residues-rich tracts occupy residues 421-432 and 458-495; these read TLERATGQREFV and VWER…EQAS. Residues 536–545 are compositionally biased toward gly residues; sequence RGRGGRGGGT. Residues 547-558 are compositionally biased toward basic and acidic residues; it reads RLWDPNNPDKKP. Positions 562–573 are enriched in low complexity; the sequence is SSQQSQHASQHQ. The segment covering 936–947 has biased composition (basic and acidic residues); it reads QVERRLKQDSDG. Polar residues predominate over residues 976 to 986; the sequence is VSGTSRPTGSE. The PINc domain occupies 1369–1522; the sequence is FYLVPDTNGF…LLTDDRNLRV (154 aa).

May form homooligomers. Associated component of the telomerase holoenzyme complex. Mn(2+) is required as a cofactor.

The protein localises to the nucleus. It localises to the nucleolus. Its subcellular location is the chromosome. The protein resides in the telomere. It is found in the cytoplasm. The protein localises to the cytosol. Its function is as follows. Component of the telomerase ribonucleoprotein (RNP) complex that is essential for the replication of chromosome termini. Required for normal embryonic development. Functionally, plays a role in nonsense-mediated mRNA decay. The polypeptide is Telomerase-binding protein EST1A (smg6) (Danio rerio (Zebrafish)).